Reading from the N-terminus, the 133-residue chain is Ribonuclease P protein component (133 aa).

It belongs to the RnpA family. In terms of assembly, consists of a catalytic RNA component (M1 or rnpB) and a protein subunit.

The enzyme catalyses Endonucleolytic cleavage of RNA, removing 5'-extranucleotides from tRNA precursor.. In terms of biological role, RNaseP catalyzes the removal of the 5'-leader sequence from pre-tRNA to produce the mature 5'-terminus. It can also cleave other RNA substrates such as 4.5S RNA. The protein component plays an auxiliary but essential role in vivo by binding to the 5'-leader sequence and broadening the substrate specificity of the ribozyme. The protein is Ribonuclease P protein component of Corynebacterium efficiens (strain DSM 44549 / YS-314 / AJ 12310 / JCM 11189 / NBRC 100395).